The sequence spans 420 residues: Small ribosomal subunit protein mS75 (420 aa).

The N-terminal 11 residues, 1-11 (MYNLSRIIYRF), are a transit peptide targeting the mitochondrion. Disordered stretches follow at residues 99-120 (RQKNAANPSSDNTPSDSGDVMS) and 390-420 (RYSPANQKRRSKRKQKRKERRIACLKAGKQT). Over residues 102–114 (NAANPSSDNTPSD) the composition is skewed to polar residues. Residues 396–409 (QKRRSKRKQKRKER) show a composition bias toward basic residues.

As to quaternary structure, component of the mitochondrial ribosome small subunit. In terms of tissue distribution, expressed at high levels in reproductive organs and, at lower levels, ubiquitously.

It is found in the mitochondrion. Functionally, essential for fertility (male and female gametophyte functions and development). Required for the integrity of female gametic mitochondria. Modulates male gametophyte functions, including pollen tube growth and style penetration. Involved in mitochondrial-driven cell-to-cell communication in embryo sacs during female gametes maturation (including embryogenesis initiation and endosperm development), especially for reciprocal signaling between central and egg cells which regulates reciprocal development. The sequence is that of Small ribosomal subunit protein mS75 from Arabidopsis thaliana (Mouse-ear cress).